A 276-amino-acid polypeptide reads, in one-letter code: 2,3,4,5-tetrahydropyridine-2,6-dicarboxylate N-succinyltransferase (276 aa).

Substrate-binding residues include Arg-100 and Asp-137.

Belongs to the transferase hexapeptide repeat family. Homotrimer.

It is found in the cytoplasm. The enzyme catalyses (S)-2,3,4,5-tetrahydrodipicolinate + succinyl-CoA + H2O = (S)-2-succinylamino-6-oxoheptanedioate + CoA. Its pathway is amino-acid biosynthesis; L-lysine biosynthesis via DAP pathway; LL-2,6-diaminopimelate from (S)-tetrahydrodipicolinate (succinylase route): step 1/3. The chain is 2,3,4,5-tetrahydropyridine-2,6-dicarboxylate N-succinyltransferase from Zymomonas mobilis subsp. mobilis (strain ATCC 31821 / ZM4 / CP4).